The following is a 319-amino-acid chain: tRNA uridine(34) hydroxylase (319 aa).

The 95-residue stretch at 127 to 221 folds into the Rhodanese domain; it reads KQEDTVIIDA…YGKDPEVQGE (95 aa). The active-site Cysteine persulfide intermediate is Cys181.

Belongs to the TrhO family.

The catalysed reaction is uridine(34) in tRNA + AH2 + O2 = 5-hydroxyuridine(34) in tRNA + A + H2O. Its function is as follows. Catalyzes oxygen-dependent 5-hydroxyuridine (ho5U) modification at position 34 in tRNAs. In Bacillus cereus (strain ZK / E33L), this protein is tRNA uridine(34) hydroxylase.